The following is a 388-amino-acid chain: Succinate--CoA ligase [ADP-forming] subunit beta (388 aa).

Residues 9-244 form the ATP-grasp domain; that stretch reads KSLFAEYGLP…PSQDDAREAH (236 aa). Residues lysine 46, 53–55, glutamate 99, threonine 102, and glutamate 107 each bind ATP; that span reads GRG. Asparagine 199 and aspartate 213 together coordinate Mg(2+). Substrate contacts are provided by residues asparagine 264 and 321–323; that span reads GIV.

Belongs to the succinate/malate CoA ligase beta subunit family. In terms of assembly, heterotetramer of two alpha and two beta subunits. It depends on Mg(2+) as a cofactor.

It carries out the reaction succinate + ATP + CoA = succinyl-CoA + ADP + phosphate. The enzyme catalyses GTP + succinate + CoA = succinyl-CoA + GDP + phosphate. It participates in carbohydrate metabolism; tricarboxylic acid cycle; succinate from succinyl-CoA (ligase route): step 1/1. Succinyl-CoA synthetase functions in the citric acid cycle (TCA), coupling the hydrolysis of succinyl-CoA to the synthesis of either ATP or GTP and thus represents the only step of substrate-level phosphorylation in the TCA. The beta subunit provides nucleotide specificity of the enzyme and binds the substrate succinate, while the binding sites for coenzyme A and phosphate are found in the alpha subunit. The sequence is that of Succinate--CoA ligase [ADP-forming] subunit beta from Shewanella frigidimarina (strain NCIMB 400).